The chain runs to 206 residues: Proteasome subunit beta 2 (206 aa).

The propeptide at 1 to 7 (MREAVSK) is removed in mature form; by autocatalysis. Catalysis depends on Thr-8, which acts as the Nucleophile.

Belongs to the peptidase T1B family. The 20S proteasome core is composed of 14 alpha and 14 beta subunits that assemble into four stacked heptameric rings, resulting in a barrel-shaped structure. The two inner rings, each composed of seven catalytic beta subunits, are sandwiched by two outer rings, each composed of seven alpha subunits. The catalytic chamber with the active sites is on the inside of the barrel. Has a gated structure, the ends of the cylinder being occluded by the N-termini of the alpha-subunits. Is capped at one or both ends by the proteasome regulatory ATPase, PAN.

The protein localises to the cytoplasm. It carries out the reaction Cleavage of peptide bonds with very broad specificity.. With respect to regulation, the formation of the proteasomal ATPase PAN-20S proteasome complex, via the docking of the C-termini of PAN into the intersubunit pockets in the alpha-rings, triggers opening of the gate for substrate entry. Interconversion between the open-gate and close-gate conformations leads to a dynamic regulation of the 20S proteasome proteolysis activity. In terms of biological role, component of the proteasome core, a large protease complex with broad specificity involved in protein degradation. The sequence is that of Proteasome subunit beta 2 from Desulfurococcus amylolyticus (strain DSM 18924 / JCM 16383 / VKM B-2413 / 1221n) (Desulfurococcus kamchatkensis).